The following is a 330-amino-acid chain: Anthranilate phosphoribosyltransferase (330 aa).

Residues G75, 78–79 (GD), T83, 85–88 (NVST), 103–111 (KHGNRAASS), and A115 each bind 5-phospho-alpha-D-ribose 1-diphosphate. G75 contacts anthranilate. S87 is a binding site for Mg(2+). Residue N106 participates in anthranilate binding. Anthranilate is bound at residue R161. Mg(2+) contacts are provided by D220 and E221.

It belongs to the anthranilate phosphoribosyltransferase family. Homodimer. The cofactor is Mg(2+).

The catalysed reaction is N-(5-phospho-beta-D-ribosyl)anthranilate + diphosphate = 5-phospho-alpha-D-ribose 1-diphosphate + anthranilate. Its pathway is amino-acid biosynthesis; L-tryptophan biosynthesis; L-tryptophan from chorismate: step 2/5. Its function is as follows. Catalyzes the transfer of the phosphoribosyl group of 5-phosphorylribose-1-pyrophosphate (PRPP) to anthranilate to yield N-(5'-phosphoribosyl)-anthranilate (PRA). This is Anthranilate phosphoribosyltransferase from Novosphingobium aromaticivorans (strain ATCC 700278 / DSM 12444 / CCUG 56034 / CIP 105152 / NBRC 16084 / F199).